A 540-amino-acid chain; its full sequence is Glucose-6-phosphate isomerase (540 aa).

The Proton donor role is filled by E350. Active-site residues include H381 and K503.

The protein belongs to the GPI family.

Its subcellular location is the cytoplasm. It catalyses the reaction alpha-D-glucose 6-phosphate = beta-D-fructose 6-phosphate. It functions in the pathway carbohydrate biosynthesis; gluconeogenesis. Its pathway is carbohydrate degradation; glycolysis; D-glyceraldehyde 3-phosphate and glycerone phosphate from D-glucose: step 2/4. Catalyzes the reversible isomerization of glucose-6-phosphate to fructose-6-phosphate. This Burkholderia lata (strain ATCC 17760 / DSM 23089 / LMG 22485 / NCIMB 9086 / R18194 / 383) protein is Glucose-6-phosphate isomerase.